The primary structure comprises 347 residues: Photosystem II assembly protein Ycf48 (347 aa).

An N-terminal signal peptide occupies residues 1-38; it reads MFAKQIDIHWQKMKGIKFLHWLLGTVLLWVSLSTPALA. The Arg-rich patch motif lies at 202–226; that stretch reads RGSFYSTWEPGQTAWEPHNRTTSRR.

The protein belongs to the Ycf48 family. As to quaternary structure, interacts with the D1 protein (crystallized with PsbA1 or PsbA3), via the latter's C-terminal prepropeptide, may interact with parts of the mature D1 protein as well.

It localises to the cellular thylakoid lumen. Its function is as follows. A factor required for optimal assembly of photosystem II (PSII), acting in the early stages of PSII assembly. Also plays a role in replacement of photodamaged D1 (psbA). Assists YidC in synthesis of chlorophyll-binding proteins. The polypeptide is Photosystem II assembly protein Ycf48 (Thermosynechococcus vestitus (strain NIES-2133 / IAM M-273 / BP-1)).